The sequence spans 126 residues: Putative esterase ComA2 (126 aa).

It belongs to the thioesterase PaaI family.

Its function is as follows. Is not required for competence. This chain is Putative esterase ComA2 (yuxO), found in Bacillus subtilis (strain 168).